The primary structure comprises 427 residues: Glutamate-1-semialdehyde 2,1-aminomutase (427 aa).

The residue at position 265 (K265) is an N6-(pyridoxal phosphate)lysine.

It belongs to the class-III pyridoxal-phosphate-dependent aminotransferase family. HemL subfamily. As to quaternary structure, homodimer. It depends on pyridoxal 5'-phosphate as a cofactor.

The protein resides in the cytoplasm. The enzyme catalyses (S)-4-amino-5-oxopentanoate = 5-aminolevulinate. The protein operates within porphyrin-containing compound metabolism; protoporphyrin-IX biosynthesis; 5-aminolevulinate from L-glutamyl-tRNA(Glu): step 2/2. The polypeptide is Glutamate-1-semialdehyde 2,1-aminomutase (Burkholderia cenocepacia (strain HI2424)).